The following is a 155-amino-acid chain: SsrA-binding protein (155 aa).

The segment covering aspartate 123–glutamine 142 has biased composition (basic and acidic residues). The segment at aspartate 123–threonine 155 is disordered. The span at leucine 143 to threonine 155 shows a compositional bias: basic residues.

The protein belongs to the SmpB family.

The protein resides in the cytoplasm. In terms of biological role, required for rescue of stalled ribosomes mediated by trans-translation. Binds to transfer-messenger RNA (tmRNA), required for stable association of tmRNA with ribosomes. tmRNA and SmpB together mimic tRNA shape, replacing the anticodon stem-loop with SmpB. tmRNA is encoded by the ssrA gene; the 2 termini fold to resemble tRNA(Ala) and it encodes a 'tag peptide', a short internal open reading frame. During trans-translation Ala-aminoacylated tmRNA acts like a tRNA, entering the A-site of stalled ribosomes, displacing the stalled mRNA. The ribosome then switches to translate the ORF on the tmRNA; the nascent peptide is terminated with the 'tag peptide' encoded by the tmRNA and targeted for degradation. The ribosome is freed to recommence translation, which seems to be the essential function of trans-translation. This is SsrA-binding protein from Methylibium petroleiphilum (strain ATCC BAA-1232 / LMG 22953 / PM1).